The following is a 776-amino-acid chain: MATGDLQGKYQKLAQEYSKLRAQNQVLKRAVVDEQANGTALKEQLKMKDQSLRKQQQEMDSLTFRNQQLAKRVELLQDELSLMDVKGKKTKKNMDTSQLSQEQKSVFDEDLQKKIEENERLHIQFFEASETHRQMESELTSRLQELETNTAQHQAVVDGLTQKYMDTIEKLQGDKAKLEVKCQALEREAKDCRLRTEDCQNQLKTLHTDLSSRLDDSLVIINEKLPFNDTRTSQLNALNVPVHNKRYQLKARELANQGLSFVRDLVTALLNFHTYTEQRVQIFPIDSAIDVVSPLNKKFSEYLHENASYVRPLEDGMLQLFESITEDTVTVLETAVKLKIFSENFSSYVCFLQKILPYQLKSLEEESEFSSGTSALRSRNQELHKDMQKITAVFDKLKTYITLLALPSTKPEGLLRTNYGTILTQISEALHRLHDISQELSKHYNNKAALEQELPAATDKLKTTNDCVLSSLAALTNVTSKIATFFGNNLDYFISSLSYGPKGGRGFTNPLSAETMLVYKKKAAQYMNNLRKPCPASVPYEEALVNRRVLLSSTESREGLAQQVQQSLEKIGKLEQEKEHWMLEAQLSKIKLEKETLRIAALIKGTEKGQLPEVPHDNALLLDAGEHGKGNSTETKSTSLIGMLTVTIEDLQAPDHDSREELIKNHYMTRIAELTTHLQQADSKAVHLYAECRALAKRLTLSDKSNRSLTEETKYSVQSISKLQDELITTKRSYEDQLSMMSDHLCVMNETLSKQREEIDTLKMANKGNSKKNKMR.

3 coiled-coil regions span residues 4 to 206 (GDLQ…LKTL), 432 to 466 (RLHDISQELSKHYNNKAALEQELPAATDKLKTTND), and 555 to 597 (ESRE…KETL).

As to quaternary structure, component of the FERRY complex.

It localises to the early endosome. Component of the FERRY complex (Five-subunit Endosomal Rab5 and RNA/ribosome intermediary). The FERRY complex directly interacts with mRNAs and RAB5A, and functions as a RAB5A effector involved in the localization and the distribution of specific mRNAs most likely by mediating their endosomal transport. The complex recruits mRNAs and ribosomes to early endosomes through direct mRNA-interaction. Putative regulator of protein phosphatase 1 (PP1) activity. May play a role in the endosomal sorting process or in endosome maturation pathway. The sequence is that of Protein phosphatase 1 regulatory subunit 21 (ppp1r21) from Xenopus laevis (African clawed frog).